The sequence spans 386 residues: Methionine aminotransferase (386 aa).

Lys236 is modified (N6-(pyridoxal phosphate)lysine).

This sequence belongs to the class-I pyridoxal-phosphate-dependent aminotransferase family. Homodimer. Requires pyridoxal 5'-phosphate as cofactor.

The protein localises to the cytoplasm. The catalysed reaction is a 2-oxocarboxylate + L-methionine = 4-methylsulfanyl-2-oxobutanoate + an L-alpha-amino acid. Shows aminotransferase activity with methionine and histidine as substrates, and to a lesser extent also with phenylalanine. In Escherichia coli (strain K12), this protein is Methionine aminotransferase (ybdL).